Reading from the N-terminus, the 580-residue chain is DNA mismatch repair protein MutL (580 aa).

This sequence belongs to the DNA mismatch repair MutL/HexB family.

In terms of biological role, this protein is involved in the repair of mismatches in DNA. It is required for dam-dependent methyl-directed DNA mismatch repair. May act as a 'molecular matchmaker', a protein that promotes the formation of a stable complex between two or more DNA-binding proteins in an ATP-dependent manner without itself being part of a final effector complex. The protein is DNA mismatch repair protein MutL of Chlamydia caviae (strain ATCC VR-813 / DSM 19441 / 03DC25 / GPIC) (Chlamydophila caviae).